The sequence spans 820 residues: Phenylalanine--tRNA ligase beta subunit (820 aa).

The tRNA-binding domain maps to 39-150 (PAPVGGVLLV…GTAAPGTPLR (112 aa)). One can recognise a B5 domain in the interval 435–510 (EVPQTITTTG…RLHGFTELPE (76 aa)). Mg(2+) contacts are provided by Asp-488, Asp-494, Glu-497, and Glu-498. An FDX-ACB domain is found at 727 to 818 (SRAPAAWRDL…AVKARGWAIR (92 aa)).

The protein belongs to the phenylalanyl-tRNA synthetase beta subunit family. Type 1 subfamily. In terms of assembly, tetramer of two alpha and two beta subunits. The cofactor is Mg(2+).

It is found in the cytoplasm. It carries out the reaction tRNA(Phe) + L-phenylalanine + ATP = L-phenylalanyl-tRNA(Phe) + AMP + diphosphate + H(+). In Deinococcus radiodurans (strain ATCC 13939 / DSM 20539 / JCM 16871 / CCUG 27074 / LMG 4051 / NBRC 15346 / NCIMB 9279 / VKM B-1422 / R1), this protein is Phenylalanine--tRNA ligase beta subunit (pheT).